The primary structure comprises 1634 residues: DNA polymerase (1634 aa).

DOD-type homing endonuclease domains follow at residues 552–693 (LIGI…RLGI) and 1163–1295 (FLGF…LVGI).

This sequence belongs to the DNA polymerase type-B family. In terms of processing, this protein undergoes a protein self splicing that involves a post-translational excision of the intervening region (intein) followed by peptide ligation.

It catalyses the reaction DNA(n) + a 2'-deoxyribonucleoside 5'-triphosphate = DNA(n+1) + diphosphate. The polypeptide is DNA polymerase (pol) (Methanocaldococcus jannaschii (strain ATCC 43067 / DSM 2661 / JAL-1 / JCM 10045 / NBRC 100440) (Methanococcus jannaschii)).